A 718-amino-acid polypeptide reads, in one-letter code: K(+)-insensitive pyrophosphate-energized proton pump (718 aa).

A run of 6 helical transmembrane segments spans residues 6–26, 54–76, 81–103, 112–132, 133–153, and 168–188; these read AVLVLVIACGVVSVLFAIWAI, LTRQYSTIAIVGVVVFLAAWYLL, AIGFLIGAVLSGVTGFIGMHVSV, AASLSLAGGLELAFKSGAITG, LLVAGLALLGVSVYYFILTVW, and VSLGFGASLISIFARLGGGIF. Residue lysine 190 participates in substrate binding. Residues aspartate 193, aspartate 197, asparagine 220, and aspartate 223 each contribute to the Mg(2+) site. 6 helical membrane-spanning segments follow: residues 240–260, 265–285, 300–320, 335–355, 385–405, and 413–433; these read AVTVVATMVLGAIFFNGSDIL, LYPLMICGACVITSIVGTFFV, GLIATGLLSIVGLAIANTLTV, GTNLFLCGLIGLIVTGLIVVI, GLAVSLESTALPAIVIVGGII, and LFGTAIAVTAMLGIAGMIVAL. A Mg(2+)-binding site is contributed by aspartate 441. A run of 4 helical transmembrane segments spans residues 472–492, 524–544, 593–613, and 620–640; these read AVTKGYAIGSAGLGALVLFAA, YVVAGLIFGGLIPYLFGGMAM, IIPSLLPVLAPIVVYFGVLLI, and AFAALGASLLGVIVNGLFVAI. Positions 650, 682, and 686 each coordinate Ca(2+). Lysine 689 provides a ligand contact to substrate. Residues 695-715 form a helical membrane-spanning segment; the sequence is AVNPAIKITNIVALLLLAVLA.

This sequence belongs to the H(+)-translocating pyrophosphatase (TC 3.A.10) family. K(+)-insensitive subfamily. Homodimer. The cofactor is Mg(2+).

Its subcellular location is the cell inner membrane. It carries out the reaction diphosphate + H2O + H(+)(in) = 2 phosphate + 2 H(+)(out). Proton pump that utilizes the energy of pyrophosphate hydrolysis as the driving force for proton movement across the membrane. Generates a proton motive force. The sequence is that of K(+)-insensitive pyrophosphate-energized proton pump from Brucella anthropi (strain ATCC 49188 / DSM 6882 / CCUG 24695 / JCM 21032 / LMG 3331 / NBRC 15819 / NCTC 12168 / Alc 37) (Ochrobactrum anthropi).